The sequence spans 177 residues: R-phycoerythrin beta chain (177 aa).

Phycourobilin contacts are provided by cysteine 50 and cysteine 61. Asparagine 72 is subject to N4-methylasparagine. Positions 82 and 158 each coordinate (2R,3E)-phycoerythrobilin.

This sequence belongs to the phycobiliprotein family. As to quaternary structure, heterodimer of an alpha and a beta chain. In terms of processing, contains two covalently linked phycoerythrobilin chromophores and one covalently linked phycourobilin chromophore.

The protein localises to the plastid. The protein resides in the chloroplast thylakoid membrane. Functionally, light-harvesting photosynthetic bile pigment-protein from the phycobiliprotein complex. The protein is R-phycoerythrin beta chain (cpeB) of Lophosiphonia boldii (Red alga).